Here is a 365-residue protein sequence, read N- to C-terminus: Probable dual-specificity RNA methyltransferase RlmN (365 aa).

The Proton acceptor role is filled by Glu108. The Radical SAM core domain occupies Tyr114–Arg352. Cys121 and Cys358 are disulfide-bonded. [4Fe-4S] cluster contacts are provided by Cys128, Cys132, and Cys135. S-adenosyl-L-methionine-binding positions include Gly179 to Glu180, Ser213, Ser236 to His238, and Asn315. Residue Cys358 is the S-methylcysteine intermediate of the active site.

The protein belongs to the radical SAM superfamily. RlmN family. The cofactor is [4Fe-4S] cluster.

It is found in the cytoplasm. The catalysed reaction is adenosine(2503) in 23S rRNA + 2 reduced [2Fe-2S]-[ferredoxin] + 2 S-adenosyl-L-methionine = 2-methyladenosine(2503) in 23S rRNA + 5'-deoxyadenosine + L-methionine + 2 oxidized [2Fe-2S]-[ferredoxin] + S-adenosyl-L-homocysteine. It catalyses the reaction adenosine(37) in tRNA + 2 reduced [2Fe-2S]-[ferredoxin] + 2 S-adenosyl-L-methionine = 2-methyladenosine(37) in tRNA + 5'-deoxyadenosine + L-methionine + 2 oxidized [2Fe-2S]-[ferredoxin] + S-adenosyl-L-homocysteine. Specifically methylates position 2 of adenine 2503 in 23S rRNA and position 2 of adenine 37 in tRNAs. This chain is Probable dual-specificity RNA methyltransferase RlmN, found in Mycolicibacterium vanbaalenii (strain DSM 7251 / JCM 13017 / BCRC 16820 / KCTC 9966 / NRRL B-24157 / PYR-1) (Mycobacterium vanbaalenii).